We begin with the raw amino-acid sequence, 638 residues long: Growth hormone receptor (638 aa).

Residues 1 to 18 form the signal peptide; that stretch reads MDLWQLLLTLALAGSSDA. The Extracellular segment spans residues 19–264; sequence FSGSEPTAAI…NQFTCEEDFY (246 aa). A glycan (N-linked (GlcNAc...) asparagine) is linked at N46. 2 disulfide bridges follow: C56/C66 and C101/C112. N115 carries an N-linked (GlcNAc...) asparagine glycan. A disulfide bond links C126 and C140. In terms of domain architecture, Fibronectin type-III spans 151–254; that stretch reads PPIALNWTLL…EVLYVTLPQM (104 aa). 3 N-linked (GlcNAc...) asparagine glycosylation sites follow: N156, N161, and N200. Positions 240 to 244 match the WSXWS motif motif; it reads YGEFS. Residues 265–288 traverse the membrane as a helical segment; sequence FPWLLIIIFGIFGLTVMLFVFLFS. The Cytoplasmic segment spans residues 289-638; sequence KQQRIKMLIL…STDQLNKIMP (350 aa). The tract at residues 294 to 379 is required for JAK2 binding; it reads KMLILPPVPV…HQKSHSNLGV (86 aa). Residues 297–305 carry the Box 1 motif motif; sequence ILPPVPVPK. Positions 340-349 match the UbE motif motif; it reads DSWVEFIELD. Phosphoserine is present on S341. The tract at residues 353 to 388 is disordered; it reads PDEKNEGSDTDRLLSSDHQKSHSNLGVKDGDSGRTS. Over residues 356-372 the composition is skewed to basic and acidic residues; that stretch reads KNEGSDTDRLLSSDHQK. A phosphotyrosine mark is found at Y487 and Y595.

It belongs to the type I cytokine receptor family. Type 1 subfamily. As to quaternary structure, on growth hormone (GH) binding, forms homodimers and binds JAK2 via a box 1-containing domain. Post-translationally, the soluble form (GHBP) is produced by phorbol ester-promoted proteolytic cleavage at the cell surface (shedding) by ADAM17/TACE. Shedding is inhibited by growth hormone (GH) binding to the receptor probably due to a conformational change in GHR rendering the receptor inaccessible to ADAM17. On GH binding, phosphorylated on tyrosine residues in the cytoplasmic domain by JAK2. In terms of processing, ubiquitinated by the ECS(SOCS2) complex following ligand-binding and phosphorylation by JAK2, leading to its degradation by the proteasome. Regulation by the ECS(SOCS2) complex acts as a negative feedback loop of growth hormone receptor signaling. Ubiquitination is not sufficient for GHR internalization.

It localises to the cell membrane. It is found in the secreted. In terms of biological role, receptor for pituitary gland growth hormone (GH1) involved in regulating postnatal body growth. On ligand binding, couples to the JAK2/STAT5 pathway. The soluble form (GHBP) acts as a reservoir of growth hormone in plasma and may be a modulator/inhibitor of GH signaling. The polypeptide is Growth hormone receptor (GHR) (Papio anubis (Olive baboon)).